A 478-amino-acid polypeptide reads, in one-letter code: Proline--tRNA ligase (478 aa).

This sequence belongs to the class-II aminoacyl-tRNA synthetase family. ProS type 3 subfamily. As to quaternary structure, homodimer.

It localises to the cytoplasm. The enzyme catalyses tRNA(Pro) + L-proline + ATP = L-prolyl-tRNA(Pro) + AMP + diphosphate. In terms of biological role, catalyzes the attachment of proline to tRNA(Pro) in a two-step reaction: proline is first activated by ATP to form Pro-AMP and then transferred to the acceptor end of tRNA(Pro). The chain is Proline--tRNA ligase from Methanococcoides burtonii (strain DSM 6242 / NBRC 107633 / OCM 468 / ACE-M).